Reading from the N-terminus, the 142-residue chain is Large ribosomal subunit protein uL13 (142 aa).

It belongs to the universal ribosomal protein uL13 family. In terms of assembly, part of the 50S ribosomal subunit.

This protein is one of the early assembly proteins of the 50S ribosomal subunit, although it is not seen to bind rRNA by itself. It is important during the early stages of 50S assembly. This chain is Large ribosomal subunit protein uL13, found in Ruthia magnifica subsp. Calyptogena magnifica.